The primary structure comprises 242 residues: Uridylate kinase (242 aa).

ATP is bound at residue 11–14 (KLSG). Positions 19 to 24 (GNMGYG) are involved in allosteric activation by GTP. Residue Gly-53 coordinates UMP. ATP contacts are provided by Gly-54 and Arg-58. Residues Asp-73 and 134–141 (SGNPFFTT) each bind UMP. Positions 161, 167, and 170 each coordinate ATP.

It belongs to the UMP kinase family. As to quaternary structure, homohexamer.

It localises to the cytoplasm. The catalysed reaction is UMP + ATP = UDP + ADP. The protein operates within pyrimidine metabolism; CTP biosynthesis via de novo pathway; UDP from UMP (UMPK route): step 1/1. Allosterically activated by GTP. Inhibited by UTP. Catalyzes the reversible phosphorylation of UMP to UDP. In Nostoc sp. (strain PCC 7120 / SAG 25.82 / UTEX 2576), this protein is Uridylate kinase.